Here is a 66-residue protein sequence, read N- to C-terminus: Kappa-flavitoxin (66 aa).

5 disulfides stabilise this stretch: Cys-3/Cys-21, Cys-14/Cys-42, Cys-27/Cys-31, Cys-46/Cys-58, and Cys-59/Cys-64.

It belongs to the three-finger toxin family. Long-chain subfamily. Kappa-neurotoxin sub-subfamily. In terms of assembly, homo- and heterodimer; non-covalently linked. As to expression, expressed by the venom gland.

It is found in the secreted. Postsynaptic neurotoxin that binds and inhibits neuronal nicotinic acetylcholine receptors (nAChR) with high affinity (IC(50)&lt;100 nM). Is a selective, and slowly reversible antagonist of alpha-3/CHRNA3-containing and some alpha-4/CHRNA4-containing AChRs. The protein is Kappa-flavitoxin of Bungarus flaviceps flaviceps (Red-headed krait).